The chain runs to 37 residues: Large ribosomal subunit protein bL36 (37 aa).

The protein belongs to the bacterial ribosomal protein bL36 family.

In Rhodococcus erythropolis (strain PR4 / NBRC 100887), this protein is Large ribosomal subunit protein bL36.